Here is an 816-residue protein sequence, read N- to C-terminus: Leucine--tRNA ligase (816 aa).

Positions 40–51 match the 'HIGH' region motif; it reads PYPSGSGLHVGH. A 'KMSKS' region motif is present at residues 576–580; the sequence is KMSKS. K579 serves as a coordination point for ATP.

This sequence belongs to the class-I aminoacyl-tRNA synthetase family.

The protein resides in the cytoplasm. The catalysed reaction is tRNA(Leu) + L-leucine + ATP = L-leucyl-tRNA(Leu) + AMP + diphosphate. In Chlorobium phaeobacteroides (strain DSM 266 / SMG 266 / 2430), this protein is Leucine--tRNA ligase.